The chain runs to 101 residues: MLTLTHFLVLAAILFAISVLGIFLNRKNLIILLMAIELMLLAVNFNFIAFSHYLSDSAGQIFVFFILTVAAAESAIGLAILVVLFRNLQSINVEDLGSLKG.

The next 3 helical transmembrane spans lie at 4–24, 30–50, and 61–81; these read LTHF…GIFL, IILL…FIAF, and IFVF…LAIL.

Belongs to the complex I subunit 4L family. NDH-1 is composed of 14 different subunits. Subunits NuoA, H, J, K, L, M, N constitute the membrane sector of the complex.

Its subcellular location is the cell inner membrane. The enzyme catalyses a quinone + NADH + 5 H(+)(in) = a quinol + NAD(+) + 4 H(+)(out). Functionally, NDH-1 shuttles electrons from NADH, via FMN and iron-sulfur (Fe-S) centers, to quinones in the respiratory chain. The immediate electron acceptor for the enzyme in this species is believed to be ubiquinone. Couples the redox reaction to proton translocation (for every two electrons transferred, four hydrogen ions are translocated across the cytoplasmic membrane), and thus conserves the redox energy in a proton gradient. The chain is NADH-quinone oxidoreductase subunit K from Chromobacterium violaceum (strain ATCC 12472 / DSM 30191 / JCM 1249 / CCUG 213 / NBRC 12614 / NCIMB 9131 / NCTC 9757 / MK).